A 308-amino-acid chain; its full sequence is HTH-type transcriptional activator AllS (308 aa).

In terms of domain architecture, HTH lysR-type spans 2-59 (FDPETLRTFISVAETGSFSKAAERLCKTTATTSYRIKLLEENTGVGLFFRTTRSVSLT). Residues 19–38 (FSKAAERLCKTTATTSYRIK) constitute a DNA-binding region (H-T-H motif).

The protein belongs to the LysR transcriptional regulatory family.

Functionally, positive regulator essential for the expression of allD operon. Binds to the allD promoter. The chain is HTH-type transcriptional activator AllS (allS) from Salmonella typhi.